Reading from the N-terminus, the 306-residue chain is MTNHIAGGGNPPGPEGDASAGIDVVLVTGLSGAGRGTAAKVLEDLGWYVADNLPPQLITRMVDFGLAAGSRITQLAVVMDVRSRGFTGDLDSVRNELATRNITPRVVFMEASDDMLVRRYEQNRRSHPLQGGHTLAEGIAAERKMLEPVRATADLIIDTSTLSVRGLRENIERAFGGDAAAITSVTVESFGFKYGLPMDADMVMDVRFLPNPHWVDELRPLTGQHQAVSDYVLGRPGASEFLQTYHELLSLVVEGYRREGKRYMTVAIGCTGGKHRSVAIAEALVGLLRSNSRLSVRVLHRDLGRE.

Position 29–36 (29–36) interacts with ATP; sequence GLSGAGRG. 80-83 is a GTP binding site; it reads DVRS.

The protein belongs to the RapZ-like family.

Functionally, displays ATPase and GTPase activities. The protein is Nucleotide-binding protein MUL_1815 of Mycobacterium ulcerans (strain Agy99).